Reading from the N-terminus, the 68-residue chain is Sperm-associated antigen 11A (68 aa).

The N-terminal stretch at 1 to 19 is a signal peptide; that stretch reads MKVLLLFAVFFCLVQRNSG. 3 disulfide bridges follow: Cys-30–Cys-59, Cys-37–Cys-52, and Cys-42–Cys-60.

This sequence belongs to the beta-defensin family. As to expression, only expressed in epididymis (middle part of the caput).

The protein resides in the secreted. In terms of biological role, has antimicrobial activity against E.coli. Plays a role in the defense response in the male reproductive tract, contributing to sperm maturation, storage and protection. This Rattus norvegicus (Rat) protein is Sperm-associated antigen 11A.